The following is a 203-amino-acid chain: Transmembrane protein 269 (203 aa).

A run of 3 helical transmembrane segments spans residues 60–80 (GLAS…LAII), 124–144 (FILC…SYYP), and 157–177 (LVYI…SAFY).

It localises to the membrane. This chain is Transmembrane protein 269, found in Homo sapiens (Human).